The primary structure comprises 174 residues: Disulfide bond formation protein B (174 aa).

Residues 1-17 (MSFQVVTGWLDNSPRRI) are Cytoplasmic-facing. A helical membrane pass occupies residues 18-34 (FAFVSLASIGMLAFGQY). Residues 35 to 52 (LQHVVGLEPCPMCIVQRY) are Periplasmic-facing. Cys-44 and Cys-47 are oxidised to a cystine. A helical membrane pass occupies residues 53–67 (ALVLVAIIAGLTGAS). Residues 68 to 74 (GRKGLHL) are Cytoplasmic-facing. The chain crosses the membrane as a helical span at residues 75–92 (GGAVLMLGSSGFGAYVAA). The Periplasmic segment spans residues 93 to 148 (RQSWLQWYPPEVVSCGRDFYGMIETFPLQRAIPMIFKGSGDCSKVDWTFLGGSIAN). The cysteines at positions 107 and 134 are disulfide-linked. The helical transmembrane segment at 149–167 (WTFVVFGLIVLLSLALIWR) threads the bilayer. Over 168–174 (RVSRRVS) the chain is Cytoplasmic.

This sequence belongs to the DsbB family.

The protein resides in the cell inner membrane. Required for disulfide bond formation in some periplasmic proteins. Acts by oxidizing the DsbA protein. The sequence is that of Disulfide bond formation protein B from Albidiferax ferrireducens (strain ATCC BAA-621 / DSM 15236 / T118) (Rhodoferax ferrireducens).